Consider the following 1033-residue polypeptide: MAQGFAVGFDPLGLGDLSSGSLSSLSSRGHLGSDSGSTATRYLLRKQQRLLNGPPRGIRASSPMGRVILINSPIEANSDESDIIHSVRVEKSPAGRLGFSVRGGSEHGLGIFVSKVEEGSSAERAGLCVGDKITEVNGLSLESTTMGSAVKVLTSSSRLHMMVRRMGRVPGIKFSKEKTTWVDVVNRRLVVEKCGSTPSDTSSEDGVRRIVHLYTTSDDFCLGFNIRGGKEFGLGIYVSKVDHGGLAEENGIKVGDQVLAANGVRFDDISHSQAVEVLKGQTHIMLTIKETGRYPAYKEMVSEYCWLDRLSNGVLQQLSPASESSSSVSSCASSAPYSSGSLPSDRMDICLGQEEPGSRGPGWGRADTAMQTEPDAGGRVETWCSVRPTVILRDTAIRSDGPHPGRRLDSALSESPKTALLLALSRPRPPITRSQSYLTLWEEKQQRKKEKSGSPGEKGALQRSKTLMNLFFKGGRQGRLARDGRREAWTLDSGSLAKTYPRLDIEKAGGVGPVQKFVTWRLRRDQERGRALLSARSGSPSSQLPNVDEQVQAWESRRPLIQDLAQRLLTDDEVLAVTRHCSRYVHEGGIEDLVRPLLAILDRPEKLLLLQDIRSVVAPTDLGRFDSMVMLVELEAFEALKSRAVRPPALRPARQDTPPKRHLITPVPDSRGGFYLLPVNGFPEEEDNGELRERLGALKVSPSASAPRHPHKGIPPLQDVPVDAFTPLRIACTPPPQLPPVAPRPLRPNWLLTEPLSREHPPQSQIRGRAQSRSRSRSRSRSRSSRGQGKSPGRRSPSPVPTPAPSMTNGRYHKPRKARPPLPRPLDGEAAKVGAKQGPSESGTEGTAKEAAMKNPSGELKTVTLSKMKQSLGISISGGIESKVQPMVKIEKIFPGGAAFLSGALQAGFELVAVDGENLEQVTHQRAVDTIRRAYRNKAREPMELVVRVPGPSPRPSPSDSSALTDGGLPADHLPAHQPLDAAPVPAHWLPEPPTNPQTPPTDARLLQPTPSPAPSPALQTPDSKPAPSPRIP.

PDZ domains follow at residues S86–R168 and I210–R293. Low complexity predominate over residues E323–S344. Disordered regions lie at residues E323–V380, K444–S464, E754–T864, and M943–P1033. The span at A770–S784 shows a compositional bias: basic residues. Over residues S785–P797 the composition is skewed to low complexity. The 73-residue stretch at T862–A934 folds into the PDZ 3 domain. Positions P991 to P1000 are enriched in pro residues.

As to quaternary structure, homodimerizes (via PDZ2 domain). Component of USH2 complex, composed of ADGRV1, PDZD7, USH2A and WHRN. Interacts (via PDZ domains) with WHRN; the interaction is direct. Interacts with USH1G. Interacts with ADGRV1 (via the cytoplasmic region). Interacts with USH2A (via the cytoplasmic region). Interacts with MYO7A (via MyTH4-FERM domains). In terms of tissue distribution, weakly expressed in the inner ear. Expressed in the retinal pigment epithelium.

It localises to the cell projection. The protein resides in the cilium. It is found in the nucleus. The protein localises to the stereocilium. Its function is as follows. In cochlear developing hair cells, essential in organizing the USH2 complex at stereocilia ankle links. Blocks inhibition of adenylate cyclase activity mediated by ADGRV1. The polypeptide is PDZ domain-containing protein 7 (Homo sapiens (Human)).